A 314-amino-acid polypeptide reads, in one-letter code: MKQYLDLEKYVLENGTQKGDRTGTGTISTFGYQMRFDLQEGFPIMTTKRVPFKLVVSELLWFLHGDTNIRYLLQHNNNIWNEWAFERFVKSDDYKGEDMTDFGLRAERDPAFKEVYQAEMEKFKTRIIEDEAFATKYGELGNIYGKQWREWKTSQGETIDQLADLIEMIKTNPNSRRLIVSAWNPEDIPNMALPPCHSLFQFYVADGKLSCQLYQRSADIFLGVPFNIASYALLTHLIAREVGLDVGEFIHTMGDAHLYNNHIEQVKEQLSRTPHALPKLVLSDKPATIFDFEVADISLDGYNPDPSIKAPISV.

DUMP contacts are provided by residues Arg21 and 176-177 (RR). Cys196 functions as the Nucleophile in the catalytic mechanism. DUMP contacts are provided by residues 216–219 (RSAD), Asn227, and 257–259 (HLY). Position 219 (Asp219) interacts with (6R)-5,10-methylene-5,6,7,8-tetrahydrofolate. Ser313 is a binding site for (6R)-5,10-methylene-5,6,7,8-tetrahydrofolate.

It belongs to the thymidylate synthase family. Bacterial-type ThyA subfamily. In terms of assembly, homodimer.

It is found in the cytoplasm. It carries out the reaction dUMP + (6R)-5,10-methylene-5,6,7,8-tetrahydrofolate = 7,8-dihydrofolate + dTMP. It participates in pyrimidine metabolism; dTTP biosynthesis. Its function is as follows. Catalyzes the reductive methylation of 2'-deoxyuridine-5'-monophosphate (dUMP) to 2'-deoxythymidine-5'-monophosphate (dTMP) while utilizing 5,10-methylenetetrahydrofolate (mTHF) as the methyl donor and reductant in the reaction, yielding dihydrofolate (DHF) as a by-product. This enzymatic reaction provides an intracellular de novo source of dTMP, an essential precursor for DNA biosynthesis. This Listeria monocytogenes serovar 1/2a (strain ATCC BAA-679 / EGD-e) protein is Thymidylate synthase.